The following is a 207-amino-acid chain: Large ribosomal subunit protein uL4 (207 aa).

The tract at residues 50 to 76 is disordered; sequence AVKNRSAVSGGGRKPWKQKGTGRARQG.

It belongs to the universal ribosomal protein uL4 family. Part of the 50S ribosomal subunit.

One of the primary rRNA binding proteins, this protein initially binds near the 5'-end of the 23S rRNA. It is important during the early stages of 50S assembly. It makes multiple contacts with different domains of the 23S rRNA in the assembled 50S subunit and ribosome. In terms of biological role, forms part of the polypeptide exit tunnel. The protein is Large ribosomal subunit protein uL4 of Macrococcus caseolyticus (strain JCSC5402) (Macrococcoides caseolyticum).